The chain runs to 681 residues: Fibulin-1 (681 aa).

A signal peptide spans 1-17 (MDLYMIVLLSLCGLLRA). 33 cysteine pairs are disulfide-bonded: cysteine 29–cysteine 55, cysteine 30–cysteine 62, cysteine 43–cysteine 63, cysteine 72–cysteine 103, cysteine 85–cysteine 104, cysteine 106–cysteine 125, cysteine 107–cysteine 138, cysteine 114–cysteine 139, cysteine 162–cysteine 171, cysteine 167–cysteine 176, cysteine 178–cysteine 191, cysteine 197–cysteine 210, cysteine 204–cysteine 219, cysteine 225–cysteine 237, cysteine 243–cysteine 256, cysteine 250–cysteine 265, cysteine 271–cysteine 283, cysteine 289–cysteine 301, cysteine 317–cysteine 330, cysteine 336–cysteine 348, cysteine 343–cysteine 357, cysteine 359–cysteine 372, cysteine 378–cysteine 390, cysteine 386–cysteine 399, cysteine 401–cysteine 414, cysteine 420–cysteine 429, cysteine 440–cysteine 454, cysteine 460–cysteine 473, cysteine 469–cysteine 482, cysteine 484–cysteine 498, cysteine 504–cysteine 517, cysteine 511–cysteine 526, and cysteine 531–cysteine 553. Anaphylatoxin-like domains follow at residues 29–63 (CCEDGKKRGLESQDCSSLPLISESTTCRVVQEQCC), 68–107 (EDSICTSGINMAKDQSSCDALLSGSSTCETKTTKMCCECC), and 108–139 (LLGSSRCRIRVSPVSSVCRWSISRGPGVRSCC). One can recognise an EGF-like 1 domain in the interval 158-192 (TEDQCRAAGCAQRCLNGTCSCLDGFKLKTDGKHCE). Asparagine 173 carries an N-linked (GlcNAc...) asparagine glycan. In terms of domain architecture, EGF-like 2; calcium-binding spans 193–238 (DINECLLGPHHCVTGERCINTLGSYRCQREISCGTGYELTDNNKCK). Residues 239–284 (DIDECDLGTHNCAAEMECQNTAGSFRCRPRMQCAAGFIQDALGSCI) form the EGF-like 3; calcium-binding domain. In terms of domain architecture, EGF-like 4; calcium-binding spans 285 to 331 (DINECVSVTALSRGQMCFNTVGSFICQRHSVTCGRGYHLNAEGTRCV). Residues 332–373 (DIDECAGPDNSCDGHGCINLVGSYRCECRTGFIFNSISRSCE) form the EGF-like 5; calcium-binding domain. Residues 374 to 415 (DIDECRNYPGRLCAHKCENILGSYKCSCTAGFKLADDGRNCD) form the EGF-like 6; calcium-binding domain. Positions 416–455 (DVNECESSPCSQGCANVYGSYQSYCRRGYQLSDADGITCE) constitute an EGF-like 7; calcium-binding domain. Positions 456–499 (DIDECALPTGGHICSYRCHNTPGSFHCTCPASGYTLAANGRSCQ) constitute an EGF-like 8; calcium-binding domain. Residues 500-554 (DIDECLTGTHSCSESESCFNIQGGFRCLSFDCPANYRRSGDTRPRVDRADIIRCV) enclose the EGF-like 9; calcium-binding domain.

The protein belongs to the fibulin family. Homomultimerizes and interacts with various extracellular matrix components such as FN1, LAMA1, NID, AGC1 and CSPG2.

Its subcellular location is the secreted. The protein resides in the extracellular space. The protein localises to the extracellular matrix. Its function is as follows. Incorporated into fibronectin-containing matrix fibers. May play a role in cell adhesion and migration along protein fibers within the extracellular matrix (ECM). Could be important for certain developmental processes and contribute to the supramolecular organization of ECM architecture, in particular to those of basement membranes. The chain is Fibulin-1 (fbln1) from Danio rerio (Zebrafish).